Consider the following 238-residue polypeptide: tRNA (guanine-N(7)-)-methyltransferase (238 aa).

4 residues coordinate S-adenosyl-L-methionine: E70, D95, D122, and D145. Residue D145 is part of the active site. Residues K149, D181, and 216-219 (TKFE) each bind substrate.

It belongs to the class I-like SAM-binding methyltransferase superfamily. TrmB family.

It carries out the reaction guanosine(46) in tRNA + S-adenosyl-L-methionine = N(7)-methylguanosine(46) in tRNA + S-adenosyl-L-homocysteine. It participates in tRNA modification; N(7)-methylguanine-tRNA biosynthesis. Functionally, catalyzes the formation of N(7)-methylguanine at position 46 (m7G46) in tRNA. The protein is tRNA (guanine-N(7)-)-methyltransferase of Neisseria meningitidis serogroup B (strain ATCC BAA-335 / MC58).